Reading from the N-terminus, the 158-residue chain is Inner membrane assembly complex subunit 17 (158 aa).

Residues 1 to 15 (MFRPLVKRVVTRRFL) constitute a mitochondrion transit peptide. Residues 16 to 85 (AAANNSNAHI…KTQETSLKKF (70 aa)) are Mitochondrial matrix-facing. The chain crosses the membrane as a helical span at residues 86–108 (VRPAWIFLLMGSIVYLSCHYVWW). Over 109-158 (KLDYEEKELEYTHKVHQLESELAALNEAHNSSVSSDKNSKRSSRKWYKFW) the chain is Mitochondrial intermembrane. Residues 110 to 140 (LDYEEKELEYTHKVHQLESELAALNEAHNSS) are a coiled coil.

This sequence belongs to the INA17 family. As to quaternary structure, component of the inner membrane assembly (INA) complex, composed of INA17 and INA22. Interacts with a subset of F(1)F(0)-ATP synthase subunits of the F(1)-domain and the peripheral stalk.

The protein localises to the mitochondrion inner membrane. Functionally, component of the INA complex (INAC) that promotes the biogenesis of mitochondrial F(1)F(0)-ATP synthase. INAC facilitates the assembly of the peripheral stalk and promotes the assembly of the catalytic F(1)-domain with the membrane-embedded F(0)-domain. The sequence is that of Inner membrane assembly complex subunit 17 from Kluyveromyces lactis (strain ATCC 8585 / CBS 2359 / DSM 70799 / NBRC 1267 / NRRL Y-1140 / WM37) (Yeast).